Consider the following 330-residue polypeptide: DNA-directed RNA polymerase I subunit RPA43 (330 aa).

The segment at 251–330 (ADVTDVTPQE…ANFESPKKRQ (80 aa)) is disordered. Phosphoserine occurs at positions 306, 318, and 325. A compositionally biased stretch (basic and acidic residues) spans 317–330 (HSEEANFESPKKRQ).

Belongs to the eukaryotic RPA43 RNA polymerase subunit family. As to quaternary structure, component of the RNA polymerase I (Pol I) complex consisting of 13 subunits: a ten-subunit catalytic core composed of POLR1A/RPA1, POLR1B/RPA2, POLR1C/RPAC1, POLR1D/RPAC2, POLR1H/RPA12, POLR2E/RPABC1, POLR2F/RPABC2, POLR2H/RPABC3, POLR2K/RPABC4 and POLR2L/RPABC5; a mobile stalk subunit POLR1F/RPA43 protruding from the core and additional subunits homologous to general transcription factors POLR1E/RPA49 and POLR1G/RPA34. Interacts with RRN3/TIF-IA. Interacts with RRN3/TIF-IA. Widely expressed.

It is found in the nucleus. The protein localises to the nucleolus. In terms of biological role, component of RNA polymerase I (Pol I), a DNA-dependent RNA polymerase which synthesizes ribosomal RNA precursors using the four ribonucleoside triphosphates as substrates. Through its association with RRN3/TIF-IA may be involved in recruitment of Pol I to rDNA promoters. This Mus musculus (Mouse) protein is DNA-directed RNA polymerase I subunit RPA43.